The following is a 468-amino-acid chain: Glutamate--tRNA ligase 2 (468 aa).

The 'HIGH' region signature appears at 9–19; it reads PSPTGHLHIGG. Positions 98, 100, 125, and 127 each coordinate Zn(2+). Positions 236–240 match the 'KMSKS' region motif; it reads RLSKR. Lys239 is an ATP binding site.

It belongs to the class-I aminoacyl-tRNA synthetase family. Glutamate--tRNA ligase type 1 subfamily. In terms of assembly, monomer. Zn(2+) is required as a cofactor.

The protein resides in the cytoplasm. The catalysed reaction is tRNA(Glu) + L-glutamate + ATP = L-glutamyl-tRNA(Glu) + AMP + diphosphate. Its function is as follows. Catalyzes the attachment of glutamate to tRNA(Glu) in a two-step reaction: glutamate is first activated by ATP to form Glu-AMP and then transferred to the acceptor end of tRNA(Glu). The chain is Glutamate--tRNA ligase 2 from Methylococcus capsulatus (strain ATCC 33009 / NCIMB 11132 / Bath).